Here is a 67-residue protein sequence, read N- to C-terminus: Conotoxin TsMMSK-011 (67 aa).

The first 20 residues, 1–20 (MMSKLGVLLTICLLLFPLTA), serve as a signal peptide directing secretion. Positions 21–50 (VQLDGDQPADLPALRTQDIATDHSPWFDPV) are excised as a propeptide. Disulfide bonds link cysteine 53–cysteine 65, cysteine 54–cysteine 61, and cysteine 58–cysteine 64. A 4-hydroxyproline modification is found at proline 63.

Belongs to the conotoxin M superfamily. As to expression, expressed by the venom duct.

Its subcellular location is the secreted. This is Conotoxin TsMMSK-011 from Conus tessulatus (Tessellate cone).